A 232-amino-acid chain; its full sequence is Uracil-DNA glycosylase (232 aa).

The Proton acceptor role is filled by aspartate 66.

Belongs to the uracil-DNA glycosylase (UDG) superfamily. UNG family.

It is found in the cytoplasm. The enzyme catalyses Hydrolyzes single-stranded DNA or mismatched double-stranded DNA and polynucleotides, releasing free uracil.. Excises uracil residues from the DNA which can arise as a result of misincorporation of dUMP residues by DNA polymerase or due to deamination of cytosine. The sequence is that of Uracil-DNA glycosylase from Lactobacillus acidophilus (strain ATCC 700396 / NCK56 / N2 / NCFM).